We begin with the raw amino-acid sequence, 266 residues long: Trypsin 5G1 (266 aa).

Residues 1–18 form the signal peptide; the sequence is MTRIILILTATFFACALG. Positions 19–39 are cleaved as a propeptide — activation peptide; it reads ASTGGSHPLRPWWNALRSSGR. Positions 40-265 constitute a Peptidase S1 domain; sequence IVGGFEVPVE…VRDWVKEVSG (226 aa). The cysteines at positions 66 and 82 are disulfide-linked. Residues histidine 81 and aspartate 125 each act as charge relay system in the active site. 2 cysteine pairs are disulfide-bonded: cysteine 190–cysteine 206 and cysteine 217–cysteine 241. Serine 221 acts as the Charge relay system in catalysis.

The protein belongs to the peptidase S1 family. In terms of tissue distribution, midgut.

It is found in the secreted. The protein resides in the extracellular space. The enzyme catalyses Preferential cleavage: Arg-|-Xaa, Lys-|-Xaa.. Major function may be to aid in digestion of the blood meal. In Aedes aegypti (Yellowfever mosquito), this protein is Trypsin 5G1.